The sequence spans 220 residues: Large ribosomal subunit protein uL3 (220 aa).

The interval 61–81 is disordered; that stretch reads KGSKSNKYANKPAEGHAKKAD.

It belongs to the universal ribosomal protein uL3 family. As to quaternary structure, part of the 50S ribosomal subunit. Forms a cluster with proteins L14 and L19.

Functionally, one of the primary rRNA binding proteins, it binds directly near the 3'-end of the 23S rRNA, where it nucleates assembly of the 50S subunit. The sequence is that of Large ribosomal subunit protein uL3 from Staphylococcus epidermidis (strain ATCC 35984 / DSM 28319 / BCRC 17069 / CCUG 31568 / BM 3577 / RP62A).